Reading from the N-terminus, the 414-residue chain is CinA-like protein (414 aa).

The protein belongs to the CinA family.

This chain is CinA-like protein, found in Acidobacterium capsulatum (strain ATCC 51196 / DSM 11244 / BCRC 80197 / JCM 7670 / NBRC 15755 / NCIMB 13165 / 161).